The primary structure comprises 274 residues: Large ribosomal subunit protein uL2 (274 aa).

A disordered region spans residues 223-274; the sequence is VAMNPVDHPHGGGEGRTGEGRHAVDPWGNLTKGYRTRNNKRTQSMIVSRRKK. A compositionally biased stretch (basic and acidic residues) spans 229-246; that stretch reads DHPHGGGEGRTGEGRHAV.

It belongs to the universal ribosomal protein uL2 family. Part of the 50S ribosomal subunit. Forms a bridge to the 30S subunit in the 70S ribosome.

In terms of biological role, one of the primary rRNA binding proteins. Required for association of the 30S and 50S subunits to form the 70S ribosome, for tRNA binding and peptide bond formation. It has been suggested to have peptidyltransferase activity; this is somewhat controversial. Makes several contacts with the 16S rRNA in the 70S ribosome. The chain is Large ribosomal subunit protein uL2 from Verminephrobacter eiseniae (strain EF01-2).